Reading from the N-terminus, the 128-residue chain is Flagellar basal body rod protein FlgB (128 aa).

This sequence belongs to the flagella basal body rod proteins family. In terms of assembly, the basal body constitutes a major portion of the flagellar organelle and consists of a number of rings mounted on a central rod. In Gram-negative bacteria, at least four rings, L, P, S and M are present, whereas Gram-positive bacteria lack the L and P rings. The rod consists of about 26 subunits of FlgG in the distal portion, and FlgB, FlgC and FlgF build up the proximal portion of the rod with about 6 subunits each. Rod assembly occurs by export via the flagellum-specific pathway of its constituent proteins and by their incorporation into the rod structure in the probable order of FlgB, FlgC, FlgF and FlgG. Another protein, FliE, also assembles onto the stable rod structure.

The protein localises to the bacterial flagellum basal body. Its function is as follows. Structural component of flagellum, the bacterial motility apparatus. Part of the rod structure of flagellar basal body. In Cereibacter sphaeroides (strain ATCC 17029 / ATH 2.4.9) (Rhodobacter sphaeroides), this protein is Flagellar basal body rod protein FlgB.